We begin with the raw amino-acid sequence, 207 residues long: Crossover junction endodeoxyribonuclease RuvC (207 aa).

Residues aspartate 11, glutamate 71, and aspartate 143 contribute to the active site. Residues aspartate 11, glutamate 71, and aspartate 143 each contribute to the Mg(2+) site.

The protein belongs to the RuvC family. In terms of assembly, homodimer which binds Holliday junction (HJ) DNA. The HJ becomes 2-fold symmetrical on binding to RuvC with unstacked arms; it has a different conformation from HJ DNA in complex with RuvA. In the full resolvosome a probable DNA-RuvA(4)-RuvB(12)-RuvC(2) complex forms which resolves the HJ. It depends on Mg(2+) as a cofactor.

It is found in the cytoplasm. The enzyme catalyses Endonucleolytic cleavage at a junction such as a reciprocal single-stranded crossover between two homologous DNA duplexes (Holliday junction).. The RuvA-RuvB-RuvC complex processes Holliday junction (HJ) DNA during genetic recombination and DNA repair. Endonuclease that resolves HJ intermediates. Cleaves cruciform DNA by making single-stranded nicks across the HJ at symmetrical positions within the homologous arms, yielding a 5'-phosphate and a 3'-hydroxyl group; requires a central core of homology in the junction. The consensus cleavage sequence is 5'-(A/T)TT(C/G)-3'. Cleavage occurs on the 3'-side of the TT dinucleotide at the point of strand exchange. HJ branch migration catalyzed by RuvA-RuvB allows RuvC to scan DNA until it finds its consensus sequence, where it cleaves and resolves the cruciform DNA. This is Crossover junction endodeoxyribonuclease RuvC from Methylobacterium radiotolerans (strain ATCC 27329 / DSM 1819 / JCM 2831 / NBRC 15690 / NCIMB 10815 / 0-1).